The primary structure comprises 139 residues: uncharacterized protein (139 aa).

The signal sequence occupies residues 1 to 32 (MEFHDDKKNELQKKEEIITEAIDTLFQSSAFG). The sHSP domain maps to 44 to 139 (SSLKDVQTTI…TLFFPKNKHE (96 aa)).

Belongs to the small heat shock protein (HSP20) family.

This is an uncharacterized protein from Bacillus subtilis (strain 168).